A 166-amino-acid chain; its full sequence is uncharacterized protein (166 aa).

Residue A2 is modified to N-acetylalanine.

In terms of assembly, homodimer.

This is an uncharacterized protein from Arabidopsis thaliana (Mouse-ear cress).